The primary structure comprises 66 residues: MAFLKKSLFLVLFLGLVSLSICEEEKRETEEEEHDQEEDDKSEEKRFLSLIPHIVSGVASLAIHFG.

An N-terminal signal peptide occupies residues 1–22 (MAFLKKSLFLVLFLGLVSLSIC). A propeptide spanning residues 23–46 (EEEKRETEEEEHDQEEDDKSEEKR) is cleaved from the precursor. The interval 25-44 (EKRETEEEEHDQEEDDKSEE) is disordered. The segment covering 30–41 (EEEEHDQEEDDK) has biased composition (acidic residues). The residue at position 65 (phenylalanine 65) is a Phenylalanine amide.

The protein belongs to the frog skin active peptide (FSAP) family. Phylloseptin subfamily. In terms of tissue distribution, expressed by the skin glands.

The protein localises to the secreted. It localises to the target cell membrane. Functionally, antimicrobial peptide with activity against the Gram-positive S.pyogenes (MIC=12.5 uM), but not against all other bacteria tested (both Gram-positive and Gram-negative). Does not show activity against fungi, and against Leishmania species. The protein is Phylloseptin-S3 of Phyllomedusa sauvagei (Sauvage's leaf frog).